Here is a 152-residue protein sequence, read N- to C-terminus: Photosystem II extrinsic protein U, chloroplastic (152 aa).

A chloroplast-targeting transit peptide spans 1-35 (MDSTAFVGAAAPLRVAAAARSTICMAAADDKPVVS). The N-terminal 24 residues, 36–59 (RRAALTGAAAAALAAVAGSLPALA), are a transit peptide targeting the thylakoid.

It belongs to the PsbU family. As to quaternary structure, PSII is composed of 1 copy each of membrane proteins PsbA, PsbB, PsbC, PsbD, PsbE, PsbF, PsbH, PsbI, PsbJ, PsbK, PsbL, PsbM, PsbT, PsbX, PsbY, PsbZ, Psb30/Ycf12, at least 3 peripheral proteins of the oxygen-evolving complex and a large number of cofactors. It forms dimeric complexes. The oxygen-evolving complex in red algae is composed of PsbO (OEC33), PsbQ', cytochrome c-550 and PsbU. Predicted to be translocated into the thylakoid lumen by the Tat system.

Its subcellular location is the plastid. The protein resides in the chloroplast thylakoid membrane. One of the extrinsic, lumenal subunits of photosystem II (PSII). PSII is a light-driven water plastoquinone oxidoreductase, using light energy to abstract electrons from H(2)O, generating a proton gradient subsequently used for ATP formation. The extrinsic proteins stabilize the structure of photosystem II oxygen-evolving complex (OEC), the ion environment of oxygen evolution and protect the OEC against heat-induced inactivation. The polypeptide is Photosystem II extrinsic protein U, chloroplastic (Pyropia yezoensis (Susabi-nori)).